Here is a 247-residue protein sequence, read N- to C-terminus: Small ribosomal subunit protein uS2 (247 aa).

The protein belongs to the universal ribosomal protein uS2 family.

This is Small ribosomal subunit protein uS2 from Halorhodospira halophila (strain DSM 244 / SL1) (Ectothiorhodospira halophila (strain DSM 244 / SL1)).